We begin with the raw amino-acid sequence, 723 residues long: Transcription factor E2F7 (723 aa).

A disordered region spans residues 121 to 146 (AEEEEEEELDDSCQYEALDESERRPS). The segment covering 122 to 139 (EEEEEEELDDSCQYEALD) has biased composition (acidic residues). DNA-binding regions lie at residues 147–216 (RKQK…VWHG) and 264–349 (RKDK…KWIG). Composition is skewed to polar residues over residues 356–370 (SSNSDDLRGQISNSG) and 395–405 (LISSAPSTPHR). 5 disordered regions span residues 356–379 (SSNSDDLRGQISNSGTERREKMAR), 395–417 (LISSAPSTPHRYSTDEPVDYSRK), 489–546 (SLRK…ASFG), 650–689 (EHHGNVPATTSSPRAEESPKPAQTQTPVTPKEASLGSKSF), and 702–723 (QSAARKRGSAQRRLDIGHTAAN). Over residues 494 to 503 (ERSEEDDHQT) the composition is skewed to basic and acidic residues. Positions 520 to 535 (SESLSSSTRRSPVCSP) are enriched in low complexity.

The protein belongs to the E2F/DP family. In terms of assembly, homodimer and heterodimer: mainly forms homodimers and, to a lesser extent, heterodimers with e2f8.

The protein resides in the nucleus. Functionally, atypical E2F transcription factor that participates in various processes such as angiogenesis and polyploidization of specialized cells. Mainly acts as a transcription repressor that binds DNA independently of DP proteins and specifically recognizes the E2 recognition site 5'-TTTC[CG]CGC-3'. Directly represses transcription of classical E2F transcription factors such as e2f1. Acts as a regulator of S-phase by recognizing and binding the E2-related site 5'-TTCCCGCC-3' and mediating repression of G1/S-regulated genes. Acts as a promoter of sprouting angiogenesis, possibly by acting as a transcription activator and promoting expression of vegfa. In Danio rerio (Zebrafish), this protein is Transcription factor E2F7 (e2f7).